The chain runs to 910 residues: Protein translocase subunit SecA (910 aa).

ATP is bound by residues glutamine 87, 105-109 (GEGKT), and aspartate 501. Zn(2+)-binding residues include cysteine 894, cysteine 896, cysteine 905, and histidine 906.

The protein belongs to the SecA family. In terms of assembly, monomer and homodimer. Part of the essential Sec protein translocation apparatus which comprises SecA, SecYEG and auxiliary proteins SecDF-YajC and YidC. Zn(2+) serves as cofactor.

It localises to the cell inner membrane. Its subcellular location is the cytoplasm. It carries out the reaction ATP + H2O + cellular proteinSide 1 = ADP + phosphate + cellular proteinSide 2.. In terms of biological role, part of the Sec protein translocase complex. Interacts with the SecYEG preprotein conducting channel. Has a central role in coupling the hydrolysis of ATP to the transfer of proteins into and across the cell membrane, serving both as a receptor for the preprotein-SecB complex and as an ATP-driven molecular motor driving the stepwise translocation of polypeptide chains across the membrane. This is Protein translocase subunit SecA from Acidiphilium cryptum (strain JF-5).